Consider the following 183-residue polypeptide: Regulatory protein RecX (183 aa).

Polar residues predominate over residues 1–12; the sequence is MTSFPHPSTSES. Residues 1–26 form a disordered region; it reads MTSFPHPSTSESGPDPDSEPNREEQA.

This sequence belongs to the RecX family.

It localises to the cytoplasm. Functionally, modulates RecA activity. The sequence is that of Regulatory protein RecX from Mycobacterium sp. (strain JLS).